The chain runs to 294 residues: Light-independent protochlorophyllide reductase iron-sulfur ATP-binding protein (294 aa).

ATP-binding positions include 10–15 and K39; that span reads GIGKST. S14 provides a ligand contact to Mg(2+). [4Fe-4S] cluster-binding residues include C95 and C129. 180–181 lines the ATP pocket; the sequence is NR.

The protein belongs to the NifH/BchL/ChlL family. In terms of assembly, homodimer. Protochlorophyllide reductase is composed of three subunits; ChlL, ChlN and ChlB. It depends on [4Fe-4S] cluster as a cofactor.

Its subcellular location is the plastid. It localises to the chloroplast. It catalyses the reaction chlorophyllide a + oxidized 2[4Fe-4S]-[ferredoxin] + 2 ADP + 2 phosphate = protochlorophyllide a + reduced 2[4Fe-4S]-[ferredoxin] + 2 ATP + 2 H2O. The protein operates within porphyrin-containing compound metabolism; chlorophyll biosynthesis (light-independent). Component of the dark-operative protochlorophyllide reductase (DPOR) that uses Mg-ATP and reduced ferredoxin to reduce ring D of protochlorophyllide (Pchlide) to form chlorophyllide a (Chlide). This reaction is light-independent. The L component serves as a unique electron donor to the NB-component of the complex, and binds Mg-ATP. The protein is Light-independent protochlorophyllide reductase iron-sulfur ATP-binding protein of Pleurastrum terricola (Filamentous green alga).